Reading from the N-terminus, the 976-residue chain is DNA-directed RNA polymerase 1, mitochondrial (976 aa).

The N-terminal 42 residues, 1 to 42 (MWRNILGRASLRKVKFLSDSSSSGTHYPVNRVRGILSSVNLS), are a transit peptide targeting the mitochondrion. Catalysis depends on residues aspartate 677, lysine 752, and aspartate 909.

This sequence belongs to the phage and mitochondrial RNA polymerase family.

It localises to the mitochondrion. It catalyses the reaction RNA(n) + a ribonucleoside 5'-triphosphate = RNA(n+1) + diphosphate. Functionally, DNA-dependent RNA polymerase catalyzes the transcription of DNA into RNA using the four ribonucleoside triphosphates as substrates. This is DNA-directed RNA polymerase 1, mitochondrial (RPOT1) from Arabidopsis thaliana (Mouse-ear cress).